The following is a 360-amino-acid chain: F420-dependent hydroxymycolic acid dehydrogenase (360 aa).

Positions 1-40 (MTGISRRTFGLAAGFGAIGAGGLGGGCSTRSGPTPTPEPA) form a signal peptide, tat-type signal. Asp-77 contributes to the coenzyme F420-(gamma-Glu)n binding site. His-78 acts as the Proton donor in catalysis. 145-146 (TG) contributes to the coenzyme F420-(gamma-Glu)n binding site. Glu-147 functions as the Proton acceptor in the catalytic mechanism. Residues Asn-150 and 213 to 214 (SG) contribute to the coenzyme F420-(gamma-Glu)n site.

It belongs to the F420-dependent hydroxymycolic acid dehydrogenase family. Homodimer. Is exported by the Tat system. The position of the signal peptide cleavage has not been experimentally proven. In terms of processing, may be lipidated.

Its subcellular location is the cell envelope. It participates in lipid metabolism; mycolic acid biosynthesis. Is inhibited by the anti-tuberculous drug PA-824, a bicyclic 4-nitroimidazole class compound. Therefore, this is consistent with the finding that PA-824 inhibits the formation of K-MAs and causes an accumulation of hydroxymycolic acids (H-MAs) in M.tuberculosis. Its function is as follows. Catalyzes the coenzyme F420-dependent oxidation of hydroxymycolic acids (H-MAs) to ketomycolic acids (K-MAs), a lipid class making up the mycobacterial pseudo-outer membrane and over one-third of the dry weight of M.tuberculosis. Does not exhibit F420-dependent glucose-6-phosphate dehydrogenase (FGD) activity. This Mycobacterium tuberculosis (strain ATCC 25618 / H37Rv) protein is F420-dependent hydroxymycolic acid dehydrogenase.